A 195-amino-acid chain; its full sequence is uncharacterized protein (195 aa).

Positions glutamate 10–glutamine 70 constitute an HTH tetR-type domain. The H-T-H motif DNA-binding region spans serine 33–phenylalanine 52.

This is an uncharacterized protein from Mycobacterium tuberculosis (strain CDC 1551 / Oshkosh).